Reading from the N-terminus, the 525-residue chain is GMP synthase [glutamine-hydrolyzing] (525 aa).

The Glutamine amidotransferase type-1 domain occupies 9-207; the sequence is RILILDFGSQ…VLTISGCEAL (199 aa). Cys86 serves as the catalytic Nucleophile. Catalysis depends on residues His181 and Glu183. The 193-residue stretch at 208-400 folds into the GMPS ATP-PPase domain; it reads WTPAKIVDDA…LGLPYDMVYR (193 aa). Residue 235–241 coordinates ATP; sequence SGGVDSS.

Homodimer.

It carries out the reaction XMP + L-glutamine + ATP + H2O = GMP + L-glutamate + AMP + diphosphate + 2 H(+). It functions in the pathway purine metabolism; GMP biosynthesis; GMP from XMP (L-Gln route): step 1/1. Catalyzes the synthesis of GMP from XMP. This Marinobacter nauticus (strain ATCC 700491 / DSM 11845 / VT8) (Marinobacter aquaeolei) protein is GMP synthase [glutamine-hydrolyzing].